A 525-amino-acid chain; its full sequence is Glucose-6-phosphate isomerase (525 aa).

Glu-347 acts as the Proton donor in catalysis. Residues His-378 and Lys-493 contribute to the active site.

Belongs to the GPI family.

The protein localises to the cytoplasm. The enzyme catalyses alpha-D-glucose 6-phosphate = beta-D-fructose 6-phosphate. Its pathway is carbohydrate biosynthesis; gluconeogenesis. The protein operates within carbohydrate degradation; glycolysis; D-glyceraldehyde 3-phosphate and glycerone phosphate from D-glucose: step 2/4. In terms of biological role, catalyzes the reversible isomerization of glucose-6-phosphate to fructose-6-phosphate. In Chlamydia trachomatis serovar D (strain ATCC VR-885 / DSM 19411 / UW-3/Cx), this protein is Glucose-6-phosphate isomerase.